Consider the following 522-residue polypeptide: Tetratricopeptide repeat protein 39C (522 aa).

3 TPR repeats span residues 254–287 (SLFM…AVDQ), 292–325 (HVCL…SRWS), and 424–457 (GLKH…ESCR).

It belongs to the TTC39 family.

The polypeptide is Tetratricopeptide repeat protein 39C (Ttc39c) (Rattus norvegicus (Rat)).